Here is a 225-residue protein sequence, read N- to C-terminus: Small ribosomal subunit protein uS3 (225 aa).

The KH type-2 domain occupies 39-109 (IYRFFNKFTR…ELKLNIEVVN (71 aa)).

The protein belongs to the universal ribosomal protein uS3 family. Part of the 30S ribosomal subunit. Forms a tight complex with proteins S10 and S14.

In terms of biological role, binds the lower part of the 30S subunit head. Binds mRNA in the 70S ribosome, positioning it for translation. The protein is Small ribosomal subunit protein uS3 of Mycoplasma mobile (strain ATCC 43663 / 163K / NCTC 11711) (Mesomycoplasma mobile).